The chain runs to 150 residues: MIWIMLATLAVVFVVGFRVLTSGARKAIRRLSDRLNIDVVPVESMVDQMGKSAGDEFLRYLHRPDESHLQNAAQVLLIWQIVIVDGSEQNLLQWHRILQKARLAAPITDAQVRLALGFLRETEPEMQDINAFQMRYNAFFQPAEGVHWLH.

This is an uncharacterized protein from Escherichia coli O157:H7.